We begin with the raw amino-acid sequence, 623 residues long: MSETNTQKAAEKHEFSAEVGRLLDLVVHALYSDREIFLRELVANAADATDKRRFEALTDSALALPENASIRINPDKSQKELTISDDGVGMTHDELAQNLGTIARSGTRAFGEKLNAAKPEDRPSLIGQFGVGFYAAFMVADRVDVTSRKAGSDEAWTWSSDGKGAFTLTPASRSTPGTDIVLHMKDDADEFLDSWRLRSIIRKWADHISWPITLRETKEDGTTEDQAANEGTALWSKPKSEITPEQYAEFYRHISHAFDEPYATLHWRAEGVTEFTALLFLPSARPFDFMEQSRESRIHLHVRRMFITDEAELVPNWMRFVQGVVDTEDLPLNVSREMLQATPVLARIRKAVTKRVLSEISKRAKEADSGFNSFWENFGAVIKEGLWEDAEHRTEIAGFARFHSTYSDDLITLDDYISRMKDGQDAIYYLTGDSLDALKSSAQLEGFRARGLEVLLLSDPVDGFWPERLSSYQEKPLRSVTHSHGDLEKFESVEADTTEAADVEKLVPALKDALGDQVKDVRSTVRLTGSAVVITSDGGPDLTMQRLMRRSGQAMPAMPPILEINPKHPLIKALAERVAKGESVKDYATVLLDLARVQEGEPLPDPTGFGRSLATLLAGPAAE.

Residues 1 to 336 (MSETNTQKAA…TEDLPLNVSR (336 aa)) are a; substrate-binding. The interval 337-546 (EMLQATPVLA…DGGPDLTMQR (210 aa)) is b. The c stretch occupies residues 547–623 (LMRRSGQAMP…ATLLAGPAAE (77 aa)).

It belongs to the heat shock protein 90 family. In terms of assembly, homodimer.

It is found in the cytoplasm. Molecular chaperone. Has ATPase activity. This Gluconobacter oxydans (strain 621H) (Gluconobacter suboxydans) protein is Chaperone protein HtpG.